Here is a 357-residue protein sequence, read N- to C-terminus: Trans-acting factor B (357 aa).

A disordered region spans residues 226 to 257; the sequence is DDNDLEEEERNASGEQTTTAREESEALDTTSN.

In terms of biological role, plasmid partition require REP1, REP2, and a cis-acting DNA sequence (known as STB). REP1 may act by intercalating in the yeast nuclear matrix and binding STB either directly or via REP2. The polypeptide is Trans-acting factor B (B) (Zygosaccharomyces bailii).